Reading from the N-terminus, the 354-residue chain is Divinyl chlorophyll a/b light-harvesting protein PcbF (354 aa).

The next 6 membrane-spanning stretches (helical) occupy residues 27 to 47, 88 to 108, 140 to 160, 201 to 221, 248 to 268, and 315 to 335; these read FIASHAAHTGMIAFGAGSNTL, VVTLAILHLILSMVYGAGGLL, FILGHHLILFGLACAWFVEWA, VMGGHAFLAFAEITGGCFHAI, AILSFSLAGIGWMAIVAAFWC, and TANFHYIAGFFAFQGHLWHAL.

Belongs to the PsbB/PsbC family. IsiA/Pcb subfamily. As to quaternary structure, the antenna complex consists of divinyl chlorophylls (a and b) and divinyl chlorophyll a/b binding proteins and binds more divinyl chlorophyll b than does the antenna complex from high-light-adapted Prochlorococcus. Requires divinyl chlorophyll a as cofactor. Divinyl chlorophyll b is required as a cofactor.

It localises to the cellular thylakoid membrane. Functionally, the antenna complex functions as a light receptor, it captures and delivers excitation energy to photosystems II and I. The Prochlorales pcb genes are not related to higher plant LHCs. This chain is Divinyl chlorophyll a/b light-harvesting protein PcbF (pcbF), found in Prochlorococcus marinus (strain SARG / CCMP1375 / SS120).